The following is a 718-amino-acid chain: ATP-dependent RNA helicase homolog DQX1 (718 aa).

The 169-residue stretch at 54–222 folds into the Helicase ATP-binding domain; the sequence is HLESSPTGVV…WGNSPIVRVP (169 aa). 67 to 74 provides a ligand contact to ATP; the sequence is GDPGSGKS. Positions 167-170 match the DEAQ box motif; it reads DEAQ. The Helicase C-terminal domain maps to 245 to 447; it reads ACQAVLELCQ…ALMRALEDLD (203 aa). The disordered stretch occupies residues 690-718; the sequence is QLREGTAEPPAAATETSSPQEYGDGCVLQ. The segment covering 696–708 has biased composition (low complexity); it reads AEPPAAATETSSP.

As to expression, ubiquitous.

It localises to the nucleus. Might be involved in RNA metabolism; it is missing helicase motif III and may not have helicase activity. The polypeptide is ATP-dependent RNA helicase homolog DQX1 (Dqx1) (Mus musculus (Mouse)).